The chain runs to 622 residues: Chaperone protein HscA homolog (622 aa).

The protein belongs to the heat shock protein 70 family.

Its function is as follows. Chaperone involved in the maturation of iron-sulfur cluster-containing proteins. Has a low intrinsic ATPase activity which is markedly stimulated by HscB. The protein is Chaperone protein HscA homolog of Burkholderia pseudomallei (strain 668).